The sequence spans 587 residues: General negative regulator of transcription subunit 4 (587 aa).

Residues 33 to 78 (CPLCIEPMDITDKNFFPCPCGYQICQFCYNNIRQNPELNGRCPACR) form an RING-type zinc finger. Residues 94–128 (EELKMERAKLARKEKERKHREKERKENEYTNRKHL) adopt a coiled-coil conformation. Residues 137–228 (NLVYVVGINP…YMDGRLIKAA (92 aa)) enclose the RRM domain. A C3H1-type zinc finger spans residues 229–256 (YGTTKYCSSYLRGLPCPNPNCMFLHEPG). Residue Lys270 forms a Glycyl lysine isopeptide (Lys-Gly) (interchain with G-Cter in ubiquitin) linkage. Residue Thr310 is modified to Phosphothreonine. Ser312 is modified (phosphoserine). Residue Thr326 is modified to Phosphothreonine. Ser360 carries the phosphoserine modification. The segment at 370–412 (TLNDSLGHHTTPTTENTITSTTTTTNTNATSHSHGSKKKQSLA) is disordered. Over residues 377-402 (HHTTPTTENTITSTTTTTNTNATSHS) the composition is skewed to low complexity.

As to quaternary structure, forms a NOT protein complex that comprises NOT1, NOT2, NOT3, NOT4 and NOT5. Subunit of the 1.0 MDa CCR4-NOT core complex that contains CCR4, CAF1, NOT1, NOT2, NOT3, NOT4, NOT5, CAF40 and CAF130. In the complex interacts with NOT1. The core complex probably is part of a less characterized 1.9 MDa CCR4-NOT complex.

Its subcellular location is the cytoplasm. The protein localises to the nucleus. It catalyses the reaction S-ubiquitinyl-[E2 ubiquitin-conjugating enzyme]-L-cysteine + [acceptor protein]-L-lysine = [E2 ubiquitin-conjugating enzyme]-L-cysteine + N(6)-ubiquitinyl-[acceptor protein]-L-lysine.. It participates in protein modification; protein ubiquitination. Functionally, E3 ubiquitin-protein ligase component of the CCR4-NOT core complex, which in the nucleus seems to be a general transcription factor, and in the cytoplasm the major mRNA deadenylase involved in mRNA turnover. The NOT protein subcomplex negatively regulates the basal and activated transcription of many genes. Preferentially affects TC-type TATA element-dependent transcription. Could directly or indirectly inhibit component(s) of the general transcription machinery. In the cytoplasm, catalyzes monoubiquitination of RPS7/es7 in response to stalled ribosomes, initiating a HEL2-dependent response that activates the No-Go Decay (NGD) pathway. This chain is General negative regulator of transcription subunit 4 (MOT2), found in Saccharomyces cerevisiae (strain ATCC 204508 / S288c) (Baker's yeast).